We begin with the raw amino-acid sequence, 165 residues long: Large ribosomal subunit protein uL11 (165 aa).

At Ser-38 the chain carries Phosphoserine. Lys-40 is covalently cross-linked (Glycyl lysine isopeptide (Lys-Gly) (interchain with G-Cter in SUMO2)). Lys-48 participates in a covalent cross-link: Glycyl lysine isopeptide (Lys-Gly) (interchain with G-Cter in ubiquitin). Lys-54 carries the post-translational modification N6-acetyllysine. Lys-83 participates in a covalent cross-link: Glycyl lysine isopeptide (Lys-Gly) (interchain with G-Cter in ubiquitin). Position 165 is a phosphoserine (Ser-165).

It belongs to the universal ribosomal protein uL11 family. In terms of assembly, component of the large ribosomal subunit. Mature ribosomes consist of a small (40S) and a large (60S) subunit. The 40S subunit contains about 33 different proteins and 1 molecule of RNA (18S). The 60S subunit contains about 49 different proteins and 3 molecules of RNA (28S, 5.8S and 5S). In terms of processing, ubiquitinated at Lys-48 and Lys-83 by RNF14 and RNF25 in response to ribosome collisions (ribosome stalling).

The protein resides in the cytoplasm. Component of the large ribosomal subunit. The ribosome is a large ribonucleoprotein complex responsible for the synthesis of proteins in the cell. Binds directly to 26S ribosomal RNA. This is Large ribosomal subunit protein uL11 (Rpl12) from Rattus norvegicus (Rat).